Consider the following 618-residue polypeptide: Keratin, type I cytoskeletal 9 (618 aa).

Positions 1–49 are disordered; it reads MSFRQISSSFRSSSGSSCGGGGGRGASRGSMRSSFGRSSRAGGESRFGS. Residues 1–137 are head; sequence MSFRQISSSF…GGEGSILNTN (137 aa). Positions 7-16 are enriched in low complexity; it reads SSSFRSSSGS. Ser14 and Ser17 each carry phosphoserine. A compositionally biased stretch (gly residues) spans 17–26; it reads SCGGGGGRGA. A compositionally biased stretch (low complexity) spans 27–49; the sequence is SRGSMRSSFGRSSRAGGESRFGS. The segment at 138–173 is coil 1A; the sequence is EKVVMQNLNSRLASYMDKVQELEEDNANLEKQIQEW. Residues 138–450 form the IF rod domain; it reads EKVVMQNLNS…KLLEGGQQDF (313 aa). The linker 1 stretch occupies residues 174 to 192; that stretch reads YSRKGNRVFQKDYSHYYNT. Positions 193 to 284 are coil 1B; that stretch reads IEDLKDRIVD…KSHKEEMNQL (92 aa). A linker 12 region spans residues 285–307; sequence TGLNDGDVNVEINVAPSTDLTQV. The coil 2 stretch occupies residues 308-446; the sequence is LNDMREEYEH…ETYRKLLEGG (139 aa). A tail region spans residues 447 to 609; the sequence is QQDFESSGAG…GGGNTRPSQS (163 aa). The tract at residues 449-618 is disordered; it reads DFESSGAGQI…SQSSQIPRLR (170 aa). A compositionally biased stretch (gly residues) spans 456–603; sequence GQIGFGSGKG…GSGGSYGGGN (148 aa). The segment covering 607 to 618 has biased composition (low complexity); sequence SQSQSSQIPRLR.

Belongs to the intermediate filament family. Heterotetramer of two type I and two type II keratins. Expressed in the perinuclear ring of spermatid manchettes within testis and in keratinocytes of the suprabasal layer of footpad epidermis (at protein level).

Its function is as follows. May serve an important special function either in the mature palmar and plantar skin tissue or in the morphogenetic program of the formation of these tissues. Plays a role in keratin filament assembly. May be involved in spermatid nuclear shaping and sperm development. The protein is Keratin, type I cytoskeletal 9 (Krt9) of Rattus norvegicus (Rat).